Here is a 96-residue protein sequence, read N- to C-terminus: MKIVKESLAGTFESSDLLVKVAPADGKLTVVINSEVIKQFGHQIKQVVNDTLKELGVQEGTIIVDDKGALDCVIRARVQSAVLRATDGQQIEWEKL.

Position 14 is an O-(phosphoribosyl dephospho-coenzyme A)serine (serine 14).

Belongs to the CitD family. In terms of assembly, oligomer with a subunit composition of (alpha,beta,gamma)6.

It is found in the cytoplasm. Covalent carrier of the coenzyme of citrate lyase. This chain is Citrate lyase acyl carrier protein, found in Pectobacterium atrosepticum (strain SCRI 1043 / ATCC BAA-672) (Erwinia carotovora subsp. atroseptica).